We begin with the raw amino-acid sequence, 380 residues long: Heme A synthase (380 aa).

Helical transmembrane passes span 36–56, 125–145, 151–171, 187–207, 227–247, 287–307, 320–340, and 344–364; these read IRAW…VGGL, VIGL…KIPA, LILP…MVAS, LATH…SILQ, FGLA…GALV, LVQF…VMVW, FAFN…IVTV, and APWQ…VLIL. H292 is a binding site for heme. H352 is a heme binding site.

Belongs to the COX15/CtaA family. Type 2 subfamily. In terms of assembly, interacts with CtaB. Heme b is required as a cofactor.

The protein resides in the cell membrane. The catalysed reaction is Fe(II)-heme o + 2 A + H2O = Fe(II)-heme a + 2 AH2. The protein operates within porphyrin-containing compound metabolism; heme A biosynthesis; heme A from heme O: step 1/1. In terms of biological role, catalyzes the conversion of heme O to heme A by two successive hydroxylations of the methyl group at C8. The first hydroxylation forms heme I, the second hydroxylation results in an unstable dihydroxymethyl group, which spontaneously dehydrates, resulting in the formyl group of heme A. The chain is Heme A synthase from Ruegeria pomeroyi (strain ATCC 700808 / DSM 15171 / DSS-3) (Silicibacter pomeroyi).